We begin with the raw amino-acid sequence, 3598 residues long: Dystrophin, isoforms A/C/F/G/H (3598 aa).

The tract at residues 1 to 230 (MEPGILIDER…YVMCLYHAME (230 aa)) is actin-binding. 2 consecutive Calponin-homology (CH) domains span residues 12–116 (HIQK…LEFN) and 127–230 (NGVE…HAME). Residues 233–297 (RTRQQEQEQD…SGELKTHSMR (65 aa)) are disordered. A compositionally biased stretch (polar residues) spans 267-286 (NDQTSLGLYTSDSAGSMEQR). Spectrin repeat units follow at residues 307–420 (VEIS…KILM), 423–525 (AEFQ…KLQQ), 851–963 (QDFG…AIEN), 1056–1170 (SHID…LLEH), 1173–1275 (TQLG…LLEQ), and 1381–1483 (SYES…TLER). 5 disordered regions span residues 1633 to 1696 (ARNT…VMPD), 1716 to 1742 (SLNPQKVTNTPPPKPAKTKRKAPSSPA), 1799 to 1854 (EDSD…ENTS), 1878 to 1941 (RDIL…EPLV), and 2204 to 2233 (GPRISNGKERPDASSAATMSCRSEYNNEPS). Positions 1663 to 1679 (SGESPSSAHTSSSESPT) are enriched in low complexity. Residues 1803-1816 (SSVRVDSQGKEMRR) are compositionally biased toward basic and acidic residues. Ser-1832 and Ser-1838 each carry phosphoserine. Over residues 1834-1843 (NDEDSAEQEE) the composition is skewed to acidic residues. The segment covering 1878-1893 (RDILRDSEEEEPKTPD) has biased composition (basic and acidic residues). Over residues 2218–2233 (SAATMSCRSEYNNEPS) the composition is skewed to polar residues. Spectrin repeat units lie at residues 2237 to 2363 (ALAG…QLKN), 2366 to 2472 (SDSQ…QLHA), 2475 to 2576 (HSLQ…RLES), 2579 to 2712 (EHWN…RLDE), and 2715 to 2819 (TKMR…VLCQ). The disordered stretch occupies residues 2655–2679 (VSDTSDTEANHDSDSRYMSAEEQSR). The tract at residues 2822-2852 (AQQTHENGDDGRTTSNSGTIGPLPNLGQSVK) is disordered. The WW domain maps to 2849 to 2882 (QSVKPPWERATTAANVPYYIDHERETTHWDHPEM). The ZZ-type zinc finger occupies 3107 to 3163 (KHQAKCNICKEYPIVGFRYRCLKCFNFDMCQKCFFFGRNAKNHKLTHPMHEYCTTTT). Residues Cys-3112, Cys-3115, Cys-3127, Cys-3130, Cys-3136, Cys-3139, His-3149, and His-3153 each coordinate Zn(2+). Position 3207 is a phosphoserine (Ser-3207). Disordered stretches follow at residues 3316–3344 (EQSGMPEDSNGMQHSSSSMTGLSGQGEQG), 3387–3449 (DEPN…KGIM), 3483–3545 (LHQQ…QQHL), and 3560–3598 (ELESINDDLEDSSSSNTTNTTTTTTTTATTEKTCVELQK). Polar residues-rich tracts occupy residues 3325–3337 (NGMQHSSSSMTGL) and 3408–3439 (ALNSKPNTLQTRSVTASQLNTDSPAKMNQQNG). The segment covering 3485 to 3499 (QQQQQQLQQQPPQQQ) has biased composition (low complexity). The span at 3505–3523 (GNGGMDISGGMQTSGGYLG) shows a compositional bias: gly residues. Over residues 3534–3545 (SSLMQQQHQQHL) the composition is skewed to low complexity. Residues 3560-3570 (ELESINDDLED) show a composition bias toward acidic residues. Residues 3571 to 3589 (SSSSNTTNTTTTTTTTATT) show a composition bias toward low complexity.

Component of the dystrophin associated protein complex (DAPC). Interacts with Dg, via the Dg WW domain binding sites. As to expression, isoform A, isoform F and isoform G are expressed in the midgut endoderm of stage 12 embryos. In stage 16 embryos, expression is also seen in the pericardial cells, cells at the ectoderm segmental border and cells along the midline of the CNS. During embryogenesis, isoform A is also expressed in the visceral mesoderm, muscle attachment sites, mesectodermal cells at the midline, the gut, and throughout muscle fibers. In larvae, isoform A is found in all muscle fibers, but not detectable in the brain or neuropil.

The protein resides in the cell membrane. It localises to the sarcolemma. The protein localises to the cytoplasm. Its subcellular location is the cytoskeleton. Required for the maintenance of appropriate synaptic retrograde communication and the stabilization of muscle cell architecture or physiology. Both det and Dg are required for maintenance of early dpp signaling in the presumptive crossvein. Isoform A is not required to maintain muscle integrity, but plays a role in neuromuscular homeostasis by regulating neurotransmitter release. May play a role in anchoring the cytoskeleton to the plasma membrane. This Drosophila melanogaster (Fruit fly) protein is Dystrophin, isoforms A/C/F/G/H (Dys).